A 516-amino-acid polypeptide reads, in one-letter code: Cytochrome P450 monooxygenase otaC (516 aa).

Residues 13–30 traverse the membrane as a helical segment; the sequence is FLWTAFAVGVVYCCTRMV. Heme is bound at residue Cys454.

Belongs to the cytochrome P450 family. The cofactor is heme.

The protein localises to the membrane. It catalyses the reaction 7-methylmellein + 3 reduced [NADPH--hemoprotein reductase] + 3 O2 = 7-carboxymellein + 3 oxidized [NADPH--hemoprotein reductase] + 4 H2O + 4 H(+). It participates in mycotoxin biosynthesis. Cytochrome P450 monooxygenase; part of the gene cluster that mediates the biosynthesis of ochratoxin A (OTA), a mycotoxin composed of a chlorinated type I polyketide dihydroisocoumarin moiety linked to L-phenylalanine, and demonstrated to have nephrotoxic, immunotoxic, genotoxic, neurotoxic, and teratogenic properties. OtaC catalyzes the oxidation of 7-methylmellein (7-MM) into 7-carboxymellein. The pathway begins with the highly reducing polyketide synthase otaA that catalyzes the formation of the isocoumarin group during the initial stages of biosynthesis, starting from one acetate and 4 malonate units, to originate the characteristic pentaketide skeleton 7-methylmellein (7-MM) of the OTA molecule. The newly identified cyclase otaY might be involved in the polyketide cyclization reaction during the initial steps of the OTA biosynthesis. 7-MM is then oxidized into 7-carboxymellein (also called ochratoxin beta) by the cytochrome P450 monooxygenase otaC. The NRPS encoded by the otaB gene is involved in the linking of phenylalanine to the dihydroisocoumarin ring. The reaction catalyzed by NRPS results in the production of ochratoxin B (OTB), which is the non-chlorinated analog of OTA and which subsequently serves as the substrate of the halogenase otaD for chlorination activity to form the final molecular structure of OTA, containing a chlorine atom in the C-5 position of the molecule. This Aspergillus carbonarius (strain ITEM 5010) protein is Cytochrome P450 monooxygenase otaC.